The chain runs to 112 residues: DNA-binding protein TGAM_1196 (112 aa).

It belongs to the PDCD5 family.

This Thermococcus gammatolerans (strain DSM 15229 / JCM 11827 / EJ3) protein is DNA-binding protein TGAM_1196.